A 499-amino-acid chain; its full sequence is Sensor histidine kinase VxrA (499 aa).

Residues 1-12 (MRYSFCMLEKTN) are Cytoplasmic-facing. A helical transmembrane segment spans residues 13–31 (IPLIRALNLTLVSLCFAML). Over 32-257 (PNPVHADSLP…ICWDVEDHSD (226 aa)) the chain is Periplasmic. Disulfide bonds link Cys101/Cys122 and Cys241/Cys249. Residues 258 to 280 (LLRTSMIILVIANIFLVLGWSGY) traverse the membrane as a helical segment. At 281 to 499 (RWNSKRQEMR…IPCETDTASR (219 aa)) the chain is on the cytoplasmic side. A Histidine kinase domain is found at 298–494 (ILTHELRTPI…TFILEIPCET (197 aa)). His301 bears the Phosphohistidine; by autocatalysis mark.

In terms of assembly, homodimer. Autophosphorylated. Contains two disulfide bonds that may play a role in the stability of the protein. However, the disulfide bonds are not absolutely essential, as some activity and growth are detected in the absence of each disulfide bond.

The protein localises to the cell inner membrane. The catalysed reaction is ATP + protein L-histidine = ADP + protein N-phospho-L-histidine.. In terms of biological role, member of the two-component regulatory system VxrB/VxrA involved in the regulation of diverses processes, including virulence, the type VI secretion system (T6SS) and biofilm formation. Functions as a sensor protein kinase which is autophosphorylated at a histidine residue and transfers its phosphate group to the conserved aspartic acid residue in the regulatory domain of VxrB. Is critical for colonization in the infant mouse model. Contributes to the resistance to beta-lactam treatment. The chain is Sensor histidine kinase VxrA from Vibrio cholerae serotype O1 (strain ATCC 39315 / El Tor Inaba N16961).